The sequence spans 524 residues: Calcium-dependent protein kinase 1 (524 aa).

The tract at residues 1 to 34 (MGCSQSSNVKDFKTRRSKFTNGNNYGKSGNNKNS) is disordered. A lipid anchor (N-myristoyl glycine) is attached at G2. C3 carries the S-palmitoyl cysteine lipid modification. The Basic cluster involved in membrane binding motif lies at 10-20 (KDFKTRRSKFT). S17, S28, and S34 each carry phosphoserine; by autocatalysis. Residues 21-32 (NGNNYGKSGNNK) are compositionally biased toward low complexity. The region spanning 56–325 (YFKVRKLGSG…AKEALNSKWI (270 aa)) is the Protein kinase domain. ATP is bound by residues 62–70 (LGSGAYGEV) and K85. Residue S64 is modified to Phosphoserine; by PKG; by autocatalysis. A Phosphothreonine; by autocatalysis modification is found at T100. S118 bears the Phosphoserine; by autocatalysis mark. Residue D191 is the Proton acceptor of the active site. S217 carries the phosphoserine modification. Position 220 is a phosphoserine; by autocatalysis (S220). T231 is modified (phosphothreonine; by PKG; by autocatalysis). Residue S335 is modified to Phosphoserine; by autocatalysis. The short motif at 346–353 (NMRKFEGS) is the J domain autoinhibitory motif element. The segment at 346–364 (NMRKFEGSQKLAQAAILFI) is j domain. Residues 354-364 (QKLAQAAILFI) carry the J domain interacts with the EF-hand domains motif. EF-hand domains follow at residues 372–407 (EERK…LRSF), 416–451 (NVEE…KQIL), 452–487 (FSEE…TSIS), and 488–521 (EQMW…ICDN). Ca(2+) contacts are provided by D385, N387, D389, Q391, E396, D429, D431, N433, Y435, E440, D465, D467, S469, K471, E476, D499, N501, D503, M505, and E510.

The protein belongs to the protein kinase superfamily. Ser/Thr protein kinase family. CDPK subfamily. Monomer. Forms a high molecular weight (250 and 400 kDa) complex. Forms a complex composed of CDPK1, PKA regulatory subunit PKAr and 14-3-3I; the complex is formed in merozoites in response to low extracellular level of K(+) and may play a role in microneme secretion. Interacts (when phosphorylated) with 14-3-3I in a Ca(2+)-independent manner; the interaction does not regulate CDPK1 catalytic activity but is required for merozoite invasion of host erythrocytes. Interacts with PKA regulatory subunit PKAr; in a Ca(2+)-dependent manner. Interacts with SERA5 p50 in the late schizont stage. Interacts with inner membrane complex protein IMC1g in late schizonts. Interacts with rhoptry protein RhopH3 in merozoites. Mg(2+) is required as a cofactor. In terms of processing, myristoylated. Myristoylation, palmitoylation and the basic cluster motif are required for the localization to the parasitophorous vacuole membrane. Post-translationally, palmitoylated. Palmitoylation increases in merozoites in response to low level of extracellular K(+) in the host blood. Myristoylation, palmitoylation and the basic cluster motif are required for the localization to the parasitophorous vacuole membrane. Phosphorylation at Ser-64 occurs at late schizont stage and regulates CDPK1 protein-protein interaction. Phosphorylated at Ser-28, Ser-34 and Ser-64 in merozoites in response to low extracellular level of K(+). Phosphorylation at Thr-231 may regulate CDPK1 kinase activity. Phosphorylation increases in response to an increase in intracellular Ca(2+) levels. Autophosphorylated in vitro. Autophosphorylation does not affect membrane localization in vitro.

The protein resides in the membrane. It localises to the cell membrane. The protein localises to the parasitophorous vacuole membrane. Its subcellular location is the cytoplasm. It is found in the cell projection. The protein resides in the cilium. It localises to the flagellum. The protein localises to the host cell membrane. It carries out the reaction L-seryl-[protein] + ATP = O-phospho-L-seryl-[protein] + ADP + H(+). The enzyme catalyses L-threonyl-[protein] + ATP = O-phospho-L-threonyl-[protein] + ADP + H(+). With respect to regulation, activated by calcium. Upon calcium binding to the EF-hand domains, the C-terminus of the junction domain (J domain) undergoes a conformational change which results in the dissociation of the pseudo-substrate inhibitory motif from the catalytic domain. This, in turn may facilitate the autophosphorylation of the activation loop at Thr-231, which leads to the kinase activation. May be negatively regulated by PKA-mediated phosphorylation. Inhibited by purfalcamine. Functionally, calcium-dependent protein kinase which acts as a sensor and effector of intracellular Ca(2+) levels probably in part downstream of cGMP-activated PKG kinase. By phosphorylating various proteins, required for microneme secretion and thus merozoite egress from and invasion of host erythrocytes. During gametogenesis, essential for the development of both male and female gametes. Phosphorylates SERA5 p50 which enhances SERA5 p50 protease activity; however, SERA5 p50 protease activity has been shown in other studies to be controversial. Probably by phosphorylating SERA5 p50, plays a role in merozoite egress from host erythrocytes. Probably prior or during merozoite invasion of host erythrocytes, phosphorylates rhoptry protein RhopH3 which is required for RhopH3 localization to rhoptries and for its secretion. Probably in late schizonts, phosphorylates myosin A tail domain-interacting protein MTIP and glideosome-associated protein 45 GAP45, both of which are components of the motor complex that generates the force required by the parasite to invade host cells. In late schizonts, phosphorylates inner membrane complex protein IMC1g. In late schizonts, phosphorylates PKA regulatory subunit PKAr in a calcium-dependent manner, which may contribute to the dissociation of regulatory PKAr and catalytic PKAc subunits and promote the activation of PKAc. May phosphorylate raf kinase inhibitory protein RKIP which in turn may regulate CDPK1 catalytic activity. May phosphorylate proteins of the host erythrocyte membranes. The chain is Calcium-dependent protein kinase 1 from Plasmodium falciparum (isolate 3D7).